The sequence spans 209 residues: Thymidine kinase (209 aa).

Residues 25–32 (GCMFAGKT) and 103–106 (DEVQ) contribute to the ATP site. Catalysis depends on glutamate 104, which acts as the Proton acceptor. Zn(2+)-binding residues include cysteine 160, cysteine 163, cysteine 198, and cysteine 201.

It belongs to the thymidine kinase family. Homotetramer.

The protein localises to the cytoplasm. The catalysed reaction is thymidine + ATP = dTMP + ADP + H(+). The chain is Thymidine kinase from Mycoplasma capricolum subsp. capricolum (strain California kid / ATCC 27343 / NCTC 10154).